The chain runs to 417 residues: Gamma-glutamyl phosphate reductase (417 aa).

Belongs to the gamma-glutamyl phosphate reductase family.

The protein resides in the cytoplasm. It carries out the reaction L-glutamate 5-semialdehyde + phosphate + NADP(+) = L-glutamyl 5-phosphate + NADPH + H(+). It participates in amino-acid biosynthesis; L-proline biosynthesis; L-glutamate 5-semialdehyde from L-glutamate: step 2/2. Functionally, catalyzes the NADPH-dependent reduction of L-glutamate 5-phosphate into L-glutamate 5-semialdehyde and phosphate. The product spontaneously undergoes cyclization to form 1-pyrroline-5-carboxylate. This chain is Gamma-glutamyl phosphate reductase, found in Haemophilus influenzae (strain PittGG).